A 449-amino-acid polypeptide reads, in one-letter code: Exodeoxyribonuclease 7 large subunit (449 aa).

Belongs to the XseA family. In terms of assembly, heterooligomer composed of large and small subunits.

It is found in the cytoplasm. It carries out the reaction Exonucleolytic cleavage in either 5'- to 3'- or 3'- to 5'-direction to yield nucleoside 5'-phosphates.. Its function is as follows. Bidirectionally degrades single-stranded DNA into large acid-insoluble oligonucleotides, which are then degraded further into small acid-soluble oligonucleotides. This chain is Exodeoxyribonuclease 7 large subunit, found in Salmonella newport (strain SL254).